Here is a 281-residue protein sequence, read N- to C-terminus: Cell growth regulator with EF hand domain protein 1 (281 aa).

The first 21 residues, 1–21 (MFQWLMQALMLPLLLLPLGRA), serve as a signal peptide directing secretion. 2 consecutive EF-hand domains span residues 71 to 106 (DREQVLLSLFALHDYDQNGQLDGLELLSMLTAALAP) and 115 to 150 (PVILVVDSVLETQDLDGDGLMTPAELINFPEVPKHT). Ca(2+) contacts are provided by Asp-84, Asp-86, Asn-88, Gln-90, Glu-95, Asp-128, Asp-130, Asp-132, and Glu-139. The disordered stretch occupies residues 148–281 (KHTESLPPAL…HSIQLENDEI (134 aa)). Positions 168-183 (LLANSPLQSETQQSLG) are enriched in polar residues. A compositionally biased stretch (basic and acidic residues) spans 184–213 (TKEEIRGQVEAKRASLEPEQEAGHQTEGKV). Phosphoserine is present on residues Ser-217 and Ser-228. The span at 237 to 256 (EGAEEQVEIKDNEGEAKELL) shows a compositional bias: basic and acidic residues.

Probably digested extracellularly by an unknown serine protease generating extremely hydrophobic bioactive peptides.

The protein resides in the secreted. Functionally, mediates cell-cell adhesion in a calcium-dependent manner. Able to inhibit growth in several cell lines. This chain is Cell growth regulator with EF hand domain protein 1, found in Mus musculus (Mouse).